The following is a 330-amino-acid chain: B3 domain-containing protein REM21 (330 aa).

Residues 23–116 (PRFFTVFLSH…SYEVSIYGRG (94 aa)) constitute a DNA-binding region (TF-B3). The span at 129-138 (EISDDTEDDN) shows a compositional bias: acidic residues. Positions 129-169 (EISDDTEDDNVSLHSPSNVSLDSLSNDSHHSTSNVSLRSLS) are disordered. The span at 142-162 (HSPSNVSLDSLSNDSHHSTSN) shows a compositional bias: low complexity.

It localises to the nucleus. This Arabidopsis thaliana (Mouse-ear cress) protein is B3 domain-containing protein REM21 (REM21).